The chain runs to 111 residues: Urease subunit beta (111 aa).

Belongs to the urease beta subunit family. In terms of assembly, heterotrimer of UreA (gamma), UreB (beta) and UreC (alpha) subunits. Three heterotrimers associate to form the active enzyme.

The protein resides in the cytoplasm. The catalysed reaction is urea + 2 H2O + H(+) = hydrogencarbonate + 2 NH4(+). It participates in nitrogen metabolism; urea degradation; CO(2) and NH(3) from urea (urease route): step 1/1. This is Urease subunit beta from Psychrobacter cryohalolentis (strain ATCC BAA-1226 / DSM 17306 / VKM B-2378 / K5).